The following is a 489-amino-acid chain: Acetylcholine receptor subunit beta (489 aa).

The signal sequence occupies residues 1–20 (NSGALLWPLIWGLLLIGTQA). Over 21 to 235 (LDKEAQLRDK…ITFYLVIQRK (215 aa)) the chain is Extracellular. 2 N-linked (GlcNAc...) asparagine glycosylation sites follow: N135 and N161. A disulfide bridge connects residues C148 and C162. 3 helical membrane-spanning segments follow: residues 236-260 (PLFY…VFYL), 268-286 (MTLS…LLLA), and 302-323 (YLIF…VLNL). Over 324–457 (HHRSPNTHHM…WQYVAMVVDR (134 aa)) the chain is Cytoplasmic. Residues 458–476 (LFLWTFIAFTSLGTLSIFL) traverse the membrane as a helical segment.

It belongs to the ligand-gated ion channel (TC 1.A.9) family. Acetylcholine receptor (TC 1.A.9.1) subfamily. Beta-1/CHRNB1 sub-subfamily. As to quaternary structure, pentamer of two alpha chains, and one each of the beta, delta, and gamma (in immature muscle) or epsilon (in mature muscle) chains.

The protein resides in the postsynaptic cell membrane. It is found in the cell membrane. The enzyme catalyses K(+)(in) = K(+)(out). It carries out the reaction Na(+)(in) = Na(+)(out). In terms of biological role, after binding acetylcholine, the AChR responds by an extensive change in conformation that affects all subunits and leads to opening of an ion-conducting channel across the plasma membrane. The protein is Acetylcholine receptor subunit beta (chrnb1) of Xenopus laevis (African clawed frog).